The primary structure comprises 341 residues: Diguanylate cyclase DgcP (341 aa).

The GAF domain occupies 18-154; sequence SLESLVRQLL…LFAGLIAQYI (137 aa). The GGDEF domain maps to 204-337; that stretch reads HKIMIAFIDL…KQKTPFVAHP (134 aa). D212 contributes to the Mg(2+) binding site. Residues N220, H225, and D229 each contribute to the substrate site. D255 is a Mg(2+) binding site. D255 acts as the Proton acceptor in catalysis.

As to quaternary structure, homodimer. It depends on Mg(2+) as a cofactor.

The catalysed reaction is 2 GTP = 3',3'-c-di-GMP + 2 diphosphate. It functions in the pathway purine metabolism; 3',5'-cyclic di-GMP biosynthesis. Its function is as follows. Catalyzes the synthesis of cyclic-di-GMP (c-di-GMP) via the condensation of 2 GTP molecules. Cyclic-di-GMP is a second messenger which controls cell surface-associated traits in bacteria. In Escherichia coli (strain K12), this protein is Diguanylate cyclase DgcP.